A 356-amino-acid polypeptide reads, in one-letter code: L-lactate dehydrogenase A (356 aa).

NAD(+) contacts are provided by residues 75–80 and Arg121; that span reads DALPDK. 3 residues coordinate substrate: Arg128, Asn160, and Arg191. Asn160 is a binding site for NAD(+). Catalysis depends on His215, which acts as the Proton acceptor. Substrate is bound at residue Thr270.

It belongs to the LDH/MDH superfamily. LDH family. As to quaternary structure, tetramer that arise from random association of LDH-A and LDH-B.

The catalysed reaction is (S)-lactate + NAD(+) = pyruvate + NADH + H(+). Its pathway is fermentation; pyruvate fermentation to lactate; (S)-lactate from pyruvate: step 1/1. In Hordeum vulgare (Barley), this protein is L-lactate dehydrogenase A.